The primary structure comprises 102 residues: Large ribosomal subunit protein bL21 (102 aa).

It belongs to the bacterial ribosomal protein bL21 family. Part of the 50S ribosomal subunit. Contacts protein L20.

Its function is as follows. This protein binds to 23S rRNA in the presence of protein L20. The protein is Large ribosomal subunit protein bL21 of Trichlorobacter lovleyi (strain ATCC BAA-1151 / DSM 17278 / SZ) (Geobacter lovleyi).